We begin with the raw amino-acid sequence, 247 residues long: Probable transcriptional regulatory protein ECA2494 (247 aa).

Belongs to the TACO1 family.

The protein localises to the cytoplasm. The polypeptide is Probable transcriptional regulatory protein ECA2494 (Pectobacterium atrosepticum (strain SCRI 1043 / ATCC BAA-672) (Erwinia carotovora subsp. atroseptica)).